A 141-amino-acid polypeptide reads, in one-letter code: D-aminoacyl-tRNA deacylase (141 aa).

Positions 133–134 (GP) match the Gly-cisPro motif, important for rejection of L-amino acids motif.

The protein belongs to the DTD family. Homodimer.

It localises to the cytoplasm. The catalysed reaction is glycyl-tRNA(Ala) + H2O = tRNA(Ala) + glycine + H(+). It catalyses the reaction a D-aminoacyl-tRNA + H2O = a tRNA + a D-alpha-amino acid + H(+). In terms of biological role, an aminoacyl-tRNA editing enzyme that deacylates mischarged D-aminoacyl-tRNAs. Also deacylates mischarged glycyl-tRNA(Ala), protecting cells against glycine mischarging by AlaRS. Acts via tRNA-based rather than protein-based catalysis; rejects L-amino acids rather than detecting D-amino acids in the active site. By recycling D-aminoacyl-tRNA to D-amino acids and free tRNA molecules, this enzyme counteracts the toxicity associated with the formation of D-aminoacyl-tRNA entities in vivo and helps enforce protein L-homochirality. This chain is D-aminoacyl-tRNA deacylase, found in Streptomyces coelicolor (strain ATCC BAA-471 / A3(2) / M145).